Here is a 152-residue protein sequence, read N- to C-terminus: Cell division protein SepF (152 aa).

Over residues 23–32 (EVAREPEPMQ) the composition is skewed to basic and acidic residues. Residues 23–42 (EVAREPEPMQKKTKKEKPSK) are disordered.

It belongs to the SepF family. Homodimer. Interacts with FtsZ.

The protein localises to the cytoplasm. Its function is as follows. Cell division protein that is part of the divisome complex and is recruited early to the Z-ring. Probably stimulates Z-ring formation, perhaps through the cross-linking of FtsZ protofilaments. Its function overlaps with FtsA. The polypeptide is Cell division protein SepF (Listeria welshimeri serovar 6b (strain ATCC 35897 / DSM 20650 / CCUG 15529 / CIP 8149 / NCTC 11857 / SLCC 5334 / V8)).